The primary structure comprises 528 residues: Phosphoenolpyruvate carboxykinase (ATP) (528 aa).

Positions 56, 192, and 198 each coordinate substrate. Residues lysine 198, histidine 217, and glycine 233–threonine 241 contribute to the ATP site. Residues lysine 198 and histidine 217 each coordinate Mn(2+). Aspartate 254 contacts Mn(2+). ATP contacts are provided by glutamate 282, arginine 319, and threonine 444. Arginine 319 contributes to the substrate binding site.

The protein belongs to the phosphoenolpyruvate carboxykinase (ATP) family. The cofactor is Mn(2+).

The protein resides in the cytoplasm. The enzyme catalyses oxaloacetate + ATP = phosphoenolpyruvate + ADP + CO2. Its pathway is carbohydrate biosynthesis; gluconeogenesis. Its function is as follows. Involved in the gluconeogenesis. Catalyzes the conversion of oxaloacetate (OAA) to phosphoenolpyruvate (PEP) through direct phosphoryl transfer between the nucleoside triphosphate and OAA. In Bacillus cereus (strain G9842), this protein is Phosphoenolpyruvate carboxykinase (ATP).